Reading from the N-terminus, the 620-residue chain is Ran-binding protein 10 (620 aa).

Residues 1-38 (MAAATADPGAGNPQAGDSSGGDSGGGLPSPGEQELSRR) form a disordered region. The residue at position 2 (alanine 2) is an N-acetylalanine. The segment covering 18–28 (SSGGDSGGGLP) has biased composition (gly residues). A B30.2/SPRY domain is found at 35–222 (LSRRLQRLYP…VDANFGQQPF (188 aa)). Residues 253–285 (WQAVLQNMVSSYLVHHGYCSTATAFARMTETPI) enclose the LisH domain. In terms of domain architecture, CTLH spans 291–348 (SIKNRQKIQKLVLEGRVGEAIETTQRFYPGLLEHNPNLLFMLKCRQFVEMVNGTDSEV). The span at 347–398 (EVRSLSSRSPKSQDSYPGSPSLSPRHGPSSSHIHNTGADSPSCSNGVASTKN) shows a compositional bias: polar residues. Positions 347 to 460 (EVRSLSSRSP…SDSEMEMEAE (114 aa)) are disordered. Serine 361 is subject to Phosphoserine. Tyrosine 362 bears the Phosphotyrosine mark. Phosphoserine occurs at positions 365, 367, 369, and 422. Residues 409–436 (SSSSSSSSSSSSSSPSSVNYSESNSTDS) show a composition bias toward low complexity. Polar residues predominate over residues 437-450 (TKSQPHSSTSNQET). Phosphoserine is present on residues serine 451 and serine 453.

It belongs to the RANBP9/10 family. As to quaternary structure, may form homodimers. Identified in the CTLH complex that contains GID4, RANBP9 and/or RANBP10, MKLN1, MAEA, RMND5A (or alternatively its paralog RMND5B), GID8, ARMC8, WDR26 and YPEL5. Within this complex, MAEA, RMND5A (or alternatively its paralog RMND5B), GID8, WDR26, and RANBP9 and/or RANBP10 form the catalytic core, while GID4, MKLN1, ARMC8 and YPEL5 have ancillary roles. Interacts with RAN and RANBP9. Interacts with the HGF receptor MET. Interacts with AR. Interacts with TUBB1. Interacts with YPEL5. May interact with TUBB5. Interacts with DDX4. Expressed at highest levels in spleen and liver. Expressed in megakaryocytes and platelets (at protein level).

Its subcellular location is the cytoplasm. It is found in the nucleus. Its function is as follows. May act as an adapter protein to couple membrane receptors to intracellular signaling pathways. Core component of the CTLH E3 ubiquitin-protein ligase complex that selectively accepts ubiquitin from UBE2H and mediates ubiquitination and subsequent proteasomal degradation of the transcription factor HBP1. Enhances dihydrotestosterone-induced transactivation activity of AR, as well as dexamethasone-induced transactivation activity of NR3C1, but does not affect estrogen-induced transactivation. Acts as a guanine nucleotide exchange factor (GEF) for RAN GTPase. May play an essential role in hemostasis and in maintaining microtubule dynamics with respect to both platelet shape and function. The polypeptide is Ran-binding protein 10 (Ranbp10) (Mus musculus (Mouse)).